The primary structure comprises 329 residues: GTPase Obg (329 aa).

The region spanning methionine 1–leucine 159 is the Obg domain. In terms of domain architecture, OBG-type G spans alanine 160–glycine 328. Residues glycine 166 to serine 173, phenylalanine 191 to valine 195, aspartate 213 to glycine 216, asparagine 280 to glutamate 283, and serine 309 to alanine 311 each bind ATP. Mg(2+)-binding residues include serine 173 and threonine 193.

Belongs to the TRAFAC class OBG-HflX-like GTPase superfamily. OBG GTPase family. As to quaternary structure, monomer. Mg(2+) serves as cofactor.

It localises to the cytoplasm. Its function is as follows. An essential GTPase which binds GTP, GDP and possibly (p)ppGpp with moderate affinity, with high nucleotide exchange rates and a fairly low GTP hydrolysis rate. Plays a role in control of the cell cycle, stress response, ribosome biogenesis and in those bacteria that undergo differentiation, in morphogenesis control. This chain is GTPase Obg, found in Prochlorococcus marinus (strain MIT 9303).